The chain runs to 101 residues: Urease subunit gamma (101 aa).

This sequence belongs to the urease gamma subunit family. In terms of assembly, heterotrimer of UreA (gamma), UreB (beta) and UreC (alpha) subunits. Three heterotrimers associate to form the active enzyme.

The protein resides in the cytoplasm. It catalyses the reaction urea + 2 H2O + H(+) = hydrogencarbonate + 2 NH4(+). The protein operates within nitrogen metabolism; urea degradation; CO(2) and NH(3) from urea (urease route): step 1/1. In Corynebacterium kroppenstedtii (strain DSM 44385 / JCM 11950 / CIP 105744 / CCUG 35717), this protein is Urease subunit gamma.